The sequence spans 314 residues: Ribosomal RNA small subunit methyltransferase H (314 aa).

Residues 36–38 (GGH), Asp56, Phe80, Asp102, and Gln109 each bind S-adenosyl-L-methionine. The segment at 278–300 (GGRSLKSIGKMKPSEEEVADNPR) is disordered. Basic and acidic residues predominate over residues 289–300 (KPSEEEVADNPR).

Belongs to the methyltransferase superfamily. RsmH family.

Its subcellular location is the cytoplasm. It catalyses the reaction cytidine(1402) in 16S rRNA + S-adenosyl-L-methionine = N(4)-methylcytidine(1402) in 16S rRNA + S-adenosyl-L-homocysteine + H(+). Specifically methylates the N4 position of cytidine in position 1402 (C1402) of 16S rRNA. In Photorhabdus laumondii subsp. laumondii (strain DSM 15139 / CIP 105565 / TT01) (Photorhabdus luminescens subsp. laumondii), this protein is Ribosomal RNA small subunit methyltransferase H.